We begin with the raw amino-acid sequence, 1254 residues long: Ubiquitin carboxyl-terminal hydrolase 12 (1254 aa).

A Phosphoserine modification is found at serine 84. Residues 97 to 199 (NVLEQQRDVV…GSYPVVTNLV (103 aa)) form the DUSP domain. The 747-residue stretch at 364 to 1110 (TGLVNLGNTC…SAYLLFYIRR (747 aa)) folds into the USP domain. Cysteine 373 functions as the Nucleophile in the catalytic mechanism. Positions 827–893 (DEGDTEGSEA…EPELTDKPEA (67 aa)) are disordered. A compositionally biased stretch (low complexity) spans 854–864 (TVTNNENVNNT). Acidic residues predominate over residues 867–883 (RDEDMELTDDVEEDAST). The active-site Proton acceptor is the histidine 1068. Serine 1160 is subject to Phosphoserine. The tract at residues 1188-1207 (QDCNDEDDNDDGERTNSGRR) is disordered. Positions 1189-1198 (DCNDEDDNDD) are enriched in acidic residues.

It belongs to the peptidase C19 family. As to quaternary structure, interacts with FZO1.

The enzyme catalyses Thiol-dependent hydrolysis of ester, thioester, amide, peptide and isopeptide bonds formed by the C-terminal Gly of ubiquitin (a 76-residue protein attached to proteins as an intracellular targeting signal).. Ubiquitin carboxyl-terminal hydrolase that recognizes ubiquitin chains that stabilize FZO1 and promote mitochondrial fusion. UBP12 deubiquitylates FZO1 only after oligomerization. In Saccharomyces cerevisiae (strain ATCC 204508 / S288c) (Baker's yeast), this protein is Ubiquitin carboxyl-terminal hydrolase 12 (UBP12).